A 462-amino-acid polypeptide reads, in one-letter code: Cysteine--tRNA ligase (462 aa).

Cys30 lines the Zn(2+) pocket. The 'HIGH' region motif lies at Met32–His42. Cys214, His239, and Glu243 together coordinate Zn(2+). The 'KMSKS' region signature appears at Lys271–Ser275. Lys274 contributes to the ATP binding site.

The protein belongs to the class-I aminoacyl-tRNA synthetase family. Monomer. Zn(2+) serves as cofactor.

It localises to the cytoplasm. The catalysed reaction is tRNA(Cys) + L-cysteine + ATP = L-cysteinyl-tRNA(Cys) + AMP + diphosphate. The protein is Cysteine--tRNA ligase of Cupriavidus pinatubonensis (strain JMP 134 / LMG 1197) (Cupriavidus necator (strain JMP 134)).